Here is a 265-residue protein sequence, read N- to C-terminus: Mlc titration factor A (265 aa).

Residues His-111, His-148, His-152, and Glu-211 each contribute to the Zn(2+) site.

This sequence belongs to the MtfA family. Interacts with Mlc. It depends on Zn(2+) as a cofactor.

The protein localises to the cytoplasm. Involved in the modulation of the activity of the glucose-phosphotransferase system (glucose-PTS). Interacts with the transcriptional repressor Mlc, preventing its interaction with DNA and leading to the modulation of expression of genes regulated by Mlc, including ptsG, which encodes the PTS system glucose-specific EIICB component. In terms of biological role, shows zinc-dependent metallopeptidase activity. The protein is Mlc titration factor A of Salmonella typhi.